The sequence spans 414 residues: S-adenosylmethionine synthase (414 aa).

Histidine 11 is a binding site for ATP. Aspartate 13 lines the Mg(2+) pocket. Glutamate 39 provides a ligand contact to K(+). L-methionine is bound by residues glutamate 52 and glutamine 95. The flexible loop stretch occupies residues 95 to 105 (QSPDIAQGVNM). Residues 169-171 (DGK), 245-246 (KF), aspartate 254, 260-261 (RK), alanine 277, and lysine 281 each bind ATP. Aspartate 254 serves as a coordination point for L-methionine. Lysine 285 is a binding site for L-methionine.

Belongs to the AdoMet synthase family. In terms of assembly, homotetramer; dimer of dimers. It depends on Mg(2+) as a cofactor. K(+) serves as cofactor.

It is found in the cytoplasm. It carries out the reaction L-methionine + ATP + H2O = S-adenosyl-L-methionine + phosphate + diphosphate. It functions in the pathway amino-acid biosynthesis; S-adenosyl-L-methionine biosynthesis; S-adenosyl-L-methionine from L-methionine: step 1/1. Catalyzes the formation of S-adenosylmethionine (AdoMet) from methionine and ATP. The overall synthetic reaction is composed of two sequential steps, AdoMet formation and the subsequent tripolyphosphate hydrolysis which occurs prior to release of AdoMet from the enzyme. In Synechococcus sp. (strain JA-2-3B'a(2-13)) (Cyanobacteria bacterium Yellowstone B-Prime), this protein is S-adenosylmethionine synthase.